The primary structure comprises 757 residues: Endonuclease MutS2 (757 aa).

Position 321-328 (321-328 (GPNMGGKT)) interacts with ATP. One can recognise a Smr domain in the interval 681–756 (IDIRGMTVEE…GTGVTVVEVK (76 aa)).

Belongs to the DNA mismatch repair MutS family. MutS2 subfamily. Homodimer. Binds to stalled ribosomes, contacting rRNA.

Functionally, endonuclease that is involved in the suppression of homologous recombination and thus may have a key role in the control of bacterial genetic diversity. Its function is as follows. Acts as a ribosome collision sensor, splitting the ribosome into its 2 subunits. Detects stalled/collided 70S ribosomes which it binds and splits by an ATP-hydrolysis driven conformational change. Acts upstream of the ribosome quality control system (RQC), a ribosome-associated complex that mediates the extraction of incompletely synthesized nascent chains from stalled ribosomes and their subsequent degradation. Probably generates substrates for RQC. In Thermotoga petrophila (strain ATCC BAA-488 / DSM 13995 / JCM 10881 / RKU-1), this protein is Endonuclease MutS2.